Consider the following 624-residue polypeptide: Probable Xaa-Pro aminopeptidase P (624 aa).

Positions 414, 425, 530, and 544 each coordinate Mn(2+).

The protein belongs to the peptidase M24B family. It depends on Mn(2+) as a cofactor.

It catalyses the reaction Release of any N-terminal amino acid, including proline, that is linked to proline, even from a dipeptide or tripeptide.. Catalyzes the removal of a penultimate prolyl residue from the N-termini of peptides. The polypeptide is Probable Xaa-Pro aminopeptidase P (AMPP) (Chaetomium globosum (strain ATCC 6205 / CBS 148.51 / DSM 1962 / NBRC 6347 / NRRL 1970) (Soil fungus)).